The following is an 891-amino-acid chain: DNA mismatch repair protein MutS (891 aa).

646-653 (GPNMAGKS) is an ATP binding site.

This sequence belongs to the DNA mismatch repair MutS family.

In terms of biological role, this protein is involved in the repair of mismatches in DNA. It is possible that it carries out the mismatch recognition step. This protein has a weak ATPase activity. The sequence is that of DNA mismatch repair protein MutS from Rickettsia massiliae (strain Mtu5).